A 569-amino-acid polypeptide reads, in one-letter code: MSPAMLQASSLCVSAALSGAASRPGRLASQGHQGKRAVAQPLAASAVTEAAPPAPVVAPPARPVDAPRRRGGRGGGGGGGELVAWKSVRQERWEGALEVDGELPLWLDGTYLRNGPGLWNLGDYGFRHLFDGYATLVRVSFRGGRAVGAHRQIESEAYKAARAHGKVCYREFSEVPKPDNFLSYVGQLATLFSGSSLTDNSNTGVVMLGDGRVLCLTETIKGSIQVDPDTLDTVGKFQYTDKLGGLIHSAHPIVTDTEFWTLIPDLIRPGYVVARMDAGSNERQFVGRVDCRGGPAPGWVHSFPVTEHYVVVPEMPLRYCAKNLLRAEPTPLYKFEWHLESGSYMHVMCKASGKIVASVEVPPFVTFHFINAYEETDEEGRVTAIIADCCEHNANTAILDKLRLHNLRSSSGQDVLPDARVGRFRIPLDGSQFGELETALDPEEHGRGMDMCSINPAHVGREYRYAYACGARRPCNFPNTLTKVDLVERTAKNWHEEGSVPSEPFFVPRPGATEEDDGVAISMVSAKDGSGYALVLDGKTFEEVARAKFPYGLPYGLHCCWVPRKRNSK.

Residues 1-43 (MSPAMLQASSLCVSAALSGAASRPGRLASQGHQGKRAVAQPLA) constitute a chloroplast transit peptide. The tract at residues 23-81 (RPGRLASQGHQGKRAVAQPLAASAVTEAAPPAPVVAPPARPVDAPRRRGGRGGGGGGGE) is disordered. Pro residues predominate over residues 52 to 62 (PPAPVVAPPAR). Histidine 251, histidine 301, histidine 368, and histidine 558 together coordinate Fe cation.

Belongs to the carotenoid oxygenase family. Requires Fe(2+) as cofactor. In terms of tissue distribution, expressed in parenchyma cells of the root stele, shoot apex, leaf buds, xylem parenchyma cells of the stem, inflorescences and panicles.

The protein localises to the plastid. The protein resides in the chloroplast. The catalysed reaction is 9-cis-10'-apo-beta-carotenal + 2 O2 = (2E,4E,6E)-7-hydroxy-4-methylhepta-2,4,6-trienal + (11R)-carlactone. The enzyme catalyses all-trans-10'-apo-beta-carotenal + O2 = (2E,4E,6E)-4-methylocta-2,4,6-trienedial + 13-apo-beta-carotenone. In terms of biological role, involved in strigolactones biosynthesis by cleaving the C(27) 9-cis-10'-apo-beta-carotenal produced by CCD7. Produces the C(19) carlactone and a C(8) hydroxyaldehyde. Also shows lower activity with all-trans-10'-apo-beta-carotenal producing a C(9) dialdehyde and the C(18) 13-apo-beta-carotenone. Strigolactones are hormones that inhibit tillering and shoot branching through the MAX-dependent pathway, contribute to the regulation of shoot architectural response to phosphate-limiting conditions and function as rhizosphere signal that stimulates hyphal branching of arbuscular mycorrhizal fungi and trigger seed germination of root parasitic weeds. In Oryza sativa subsp. japonica (Rice), this protein is Carotenoid cleavage dioxygenase 8 homolog B, chloroplastic (CCD8B).